Consider the following 314-residue polypeptide: Protein ATP1B4 (314 aa).

Positions 1-17 are enriched in polar residues; sequence MATTAGEQANYLQSADS. Residues 1 to 37 form a disordered region; sequence MATTAGEQANYLQSADSMSDGRQHHPEEAGEKKQEEQ. Topologically, residues 1-69 are cytoplasmic; sequence MATTAGEQAN…VLGRDKKSWA (69 aa). Positions 19–37 are enriched in basic and acidic residues; that stretch reads SDGRQHHPEEAGEKKQEEQ. A helical membrane pass occupies residues 70 to 90; that stretch reads LILLFYFILYCFLAGLFALCI. Residues 91–314 lie on the Extracellular side of the membrane; that stretch reads YGLLATISPY…GRVAFTLHIG (224 aa). Cys160 and Cys179 are disulfide-bonded. The N-linked (GlcNAc...) asparagine glycan is linked to Asn188. Intrachain disulfides connect Cys189–Cys205 and Cys228–Cys287. Asn264 carries N-linked (GlcNAc...) asparagine glycosylation.

Belongs to the X(+)/potassium ATPases subunit beta family. Composed of two subunits: alpha (catalytic) and beta (accessory). Glycosylated. Expressed in skeletal muscle, liver, lung, kidney, heart, brain and skin.

The protein resides in the membrane. In terms of biological role, this is the non-catalytic component of the active enzyme, which catalyzes the hydrolysis of ATP coupled with the exchange of Na(+) and K(+) ions across the plasma membrane. This chain is Protein ATP1B4 (atp1b4), found in Xenopus laevis (African clawed frog).